Reading from the N-terminus, the 311-residue chain is tRNA pseudouridine synthase B (311 aa).

D39 serves as the catalytic Nucleophile. The tract at residues 237 to 268 (RELSEQETTEISFGRRIAAGPGAGTPDAATAE) is disordered. A compositionally biased stretch (low complexity) spans 254–268 (AAGPGAGTPDAATAE).

It belongs to the pseudouridine synthase TruB family. Type 1 subfamily.

It carries out the reaction uridine(55) in tRNA = pseudouridine(55) in tRNA. Responsible for synthesis of pseudouridine from uracil-55 in the psi GC loop of transfer RNAs. The protein is tRNA pseudouridine synthase B of Paenarthrobacter aurescens (strain TC1).